The following is a 310-amino-acid chain: RING-H2 finger protein ATL60 (310 aa).

The helical transmembrane segment at 24–44 (VLLFSIVSIFTGILFLLLLHL) threads the bilayer. The RING-type; atypical zinc-finger motif lies at 120–162 (CAVCLSDLVDGDKARVLPRCNHGFHVDCIDMWFQSHSTCPLCR). Disordered regions lie at residues 170–201 (DTTH…QDQS) and 240–260 (GNFA…RSQE). Polar residues predominate over residues 179 to 201 (LPQNQNFESGHSTNQHNPSQDQS).

It belongs to the RING-type zinc finger family. ATL subfamily.

The protein resides in the membrane. It carries out the reaction S-ubiquitinyl-[E2 ubiquitin-conjugating enzyme]-L-cysteine + [acceptor protein]-L-lysine = [E2 ubiquitin-conjugating enzyme]-L-cysteine + N(6)-ubiquitinyl-[acceptor protein]-L-lysine.. Its pathway is protein modification; protein ubiquitination. The chain is RING-H2 finger protein ATL60 (ATL60) from Arabidopsis thaliana (Mouse-ear cress).